The chain runs to 870 residues: Pre-mRNA-processing factor 40 homolog B (870 aa).

WW domains are found at residues glycine 92–valine 125 and leucine 133–aspartate 166. Positions threonine 146–glutamate 277 are disordered. Position 148 is an N6-acetyllysine (lysine 148). Lysine 175 is covalently cross-linked (Glycyl lysine isopeptide (Lys-Gly) (interchain with G-Cter in SUMO2)). Low complexity predominate over residues glutamine 182–glutamine 191. A compositionally biased stretch (pro residues) spans proline 192–valine 211. 6 FF domains span residues arginine 276–glutamine 330, arginine 340–phenylalanine 397, arginine 410–alanine 470, glutamine 490–glutamate 550, arginine 554–lysine 610, and arginine 625–valine 682. A coiled-coil region spans residues phenylalanine 604–alanine 640. Residues histidine 690–glutamine 870 are disordered. Over residues leucine 691–histidine 711 the composition is skewed to basic residues. Low complexity-rich tracts occupy residues serine 739–glycine 756 and serine 764–aspartate 774. Serine 764 is subject to Phosphoserine. The span at arginine 778 to serine 794 shows a compositional bias: basic residues. The segment covering glutamate 804 to glutamine 824 has biased composition (basic and acidic residues). The residue at position 831 (serine 831) is a Phosphoserine. Lysine 837 is covalently cross-linked (Glycyl lysine isopeptide (Lys-Gly) (interchain with G-Cter in SUMO2)). Residue serine 851 is modified to Phosphoserine.

This sequence belongs to the PRPF40 family. As to quaternary structure, interacts with the N-terminus of HD.

The protein resides in the nucleus speckle. In terms of biological role, may be involved in pre-mRNA splicing. In Mus musculus (Mouse), this protein is Pre-mRNA-processing factor 40 homolog B (Prpf40b).